We begin with the raw amino-acid sequence, 296 residues long: uncharacterized protein (296 aa).

The protein resides in the mitochondrion. This is an uncharacterized protein from Podospora anserina (strain S / ATCC MYA-4624 / DSM 980 / FGSC 10383) (Pleurage anserina).